A 431-amino-acid polypeptide reads, in one-letter code: Trigger factor (431 aa).

One can recognise a PPIase FKBP-type domain in the interval 158–243 (GYLVALETWS…VIEVSEPVLL (86 aa)).

The protein belongs to the FKBP-type PPIase family. Tig subfamily.

It is found in the cytoplasm. The catalysed reaction is [protein]-peptidylproline (omega=180) = [protein]-peptidylproline (omega=0). Functionally, involved in protein export. Acts as a chaperone by maintaining the newly synthesized protein in an open conformation. Functions as a peptidyl-prolyl cis-trans isomerase. The chain is Trigger factor from Xylella fastidiosa (strain M23).